We begin with the raw amino-acid sequence, 131 residues long: MKIFLPVLLAALLGVERASSLMCFSCLNQKSNLYCLKPTICSDQDNYCVTVSASAGIGNLVTFGHSLSKTCSPACPIPEGVNVGVASMGISCCQSFLCNFSAADGGLRASVTLLGAGLLLSLLPALLRFGP.

An N-terminal signal peptide occupies residues 1–20 (MKIFLPVLLAALLGVERASS). The 81-residue stretch at 21–101 (LMCFSCLNQK…CCQSFLCNFS (81 aa)) folds into the UPAR/Ly6 domain. Cystine bridges form between Cys-23-Cys-48, Cys-26-Cys-35, Cys-41-Cys-71, Cys-75-Cys-92, and Cys-93-Cys-98. N-linked (GlcNAc...) asparagine glycosylation is present at Asn-99. Residue Ser-101 is the site of GPI-anchor amidated serine attachment. Positions 102 to 131 (AADGGLRASVTLLGAGLLLSLLPALLRFGP) are cleaved as a propeptide — removed in mature form.

In terms of assembly, interacts with CHRNA4. Widely expressed, predominantly in liver, kidney, ovary, spleen and peripheral blood Leukocytes.

The protein resides in the cell membrane. In terms of biological role, GPI-anchored cell surface protein that regulates T-lymphocytes proliferation, differentiation, and activation. Regulates the T-cell receptor (TCR) signaling by interacting with component CD3Z/CD247 at the plasma membrane, leading to CD3Z/CD247 phosphorylation modulation. Restricts the entry of human coronaviruses, including SARS-CoV, MERS-CoV and SARS-CoV-2, by interfering with spike protein-mediated membrane fusion. Also plays an essential role in placenta formation by acting as the main receptor for syncytin-A (SynA). Therefore, participates in the normal fusion of syncytiotrophoblast layer I (SynT-I) and in the proper morphogenesis of both fetal and maternal vasculatures within the placenta. May also act as a modulator of nicotinic acetylcholine receptors (nAChRs) activity. (Microbial infection) Promotes entry, likely through an enhanced virus-cell fusion process, of various viruses including HIV-1, West Nile virus, dengue virus and Zika virus. In contrast, the paramyxovirus PIV5, which enters at the plasma membrane, does not require LY6E. Mechanistically, adopts a microtubule-like organization upon viral infection and enhances viral uncoating after endosomal escape. The sequence is that of Lymphocyte antigen 6E from Homo sapiens (Human).